The chain runs to 201 residues: Two-component response regulator ORR10 (201 aa).

The Response regulatory domain occupies His-10–Leu-142. Asp-75 bears the 4-aspartylphosphate mark. The interval His-149–Ser-201 is disordered. Residues Ser-158–Asn-180 are compositionally biased toward low complexity.

It belongs to the ARR family. Type-A subfamily. Post-translationally, two-component system major event consists of a His-to-Asp phosphorelay between a sensor histidine kinase (HK) and a response regulator (RR). In plants, the His-to-Asp phosphorelay involves an additional intermediate named Histidine-containing phosphotransfer protein (HPt). This multistep phosphorelay consists of a His-Asp-His-Asp sequential transfer of a phosphate group between first a His and an Asp of the HK protein, followed by the transfer to a conserved His of the HPt protein and finally the transfer to an Asp in the receiver domain of the RR protein. In terms of tissue distribution, expressed in mature leaves, and at low levels in roots, shoots and flowers.

Functionally, functions as a response regulator involved in His-to-Asp phosphorelay signal transduction system. Phosphorylation of the Asp residue in the receiver domain activates the ability of the protein to promote the transcription of target genes. Type-A response regulators seem to act as negative regulators of the cytokinin signaling. The protein is Two-component response regulator ORR10 of Oryza sativa subsp. indica (Rice).